A 483-amino-acid chain; its full sequence is Inositol-pentakisphosphate 2-kinase (483 aa).

The EXKPK motif signature appears at 140-144; the sequence is EIKPK. A disordered region spans residues 279–298; sequence SNRSGEPRKMHLSESKPHCE. Positions 281–297 are enriched in basic and acidic residues; it reads RSGEPRKMHLSESKPHC.

The protein belongs to the IPK1 type 2 family. Expressed both maternally and zygotically. Expressed in cleavage-stage embryos. Ubiquitously distributed throughout blastula stages of embryogenesis. At the onset of gastrulation, it is enriched in cells around the blastoderm margin. At shield stage, expression is detected in the deep involuted cells that contribute to mesendoderm. During mid and late gastrula stages, it is strongly expressed in axial mesendoderm. However, it is not present in the nascent tailbud at yolk plug closure (YPC) stage. Expression in axial mesendoderm is reduced at the 2 somite stage (SS). At 6 SS, it is expressed in cells surrounding Kupffer's vesicle, but apparently not within. By 10 SS, it is no longer detected as a specific signal above background.

It is found in the cytoplasm. The protein localises to the nucleus. The catalysed reaction is 1D-myo-inositol 1,3,4,5,6-pentakisphosphate + ATP = 1D-myo-inositol hexakisphosphate + ADP + H(+). Its function is as follows. Phosphorylates Ins(1,3,4,5,6)P5 at position 2 to form Ins(1,2,3,4,5,6)P6 (InsP6 or phytate). InsP6 is involved in many processes such as mRNA export, non-homologous end-joining, endocytosis and ion channel regulation. InsP6 also acts as a key regulator of left-right asymmetry in embryo, probably by regulating asymmetric Ca(2+) during left-right specification. The sequence is that of Inositol-pentakisphosphate 2-kinase (ippk) from Danio rerio (Zebrafish).